The following is a 55-amino-acid chain: ATP synthase F(0) complex subunit 8 (55 aa).

The helical transmembrane segment at 10–32 (FFTMLTTWLTFLLLIQPKLLSFI) threads the bilayer.

The protein belongs to the ATPase protein 8 family. In terms of assembly, component of the ATP synthase complex composed at least of ATP5F1A/subunit alpha, ATP5F1B/subunit beta, ATP5MC1/subunit c (homooctomer), MT-ATP6/subunit a, MT-ATP8/subunit 8, ATP5ME/subunit e, ATP5MF/subunit f, ATP5MG/subunit g, ATP5MK/subunit k, ATP5MJ/subunit j, ATP5F1C/subunit gamma, ATP5F1D/subunit delta, ATP5F1E/subunit epsilon, ATP5PF/subunit F6, ATP5PB/subunit b, ATP5PD/subunit d, ATP5PO/subunit OSCP. ATP synthase complex consists of a soluble F(1) head domain (subunits alpha(3) and beta(3)) - the catalytic core - and a membrane F(0) domain - the membrane proton channel (subunits c, a, 8, e, f, g, k and j). These two domains are linked by a central stalk (subunits gamma, delta, and epsilon) rotating inside the F1 region and a stationary peripheral stalk (subunits F6, b, d, and OSCP).

The protein resides in the mitochondrion membrane. Its function is as follows. Subunit 8, of the mitochondrial membrane ATP synthase complex (F(1)F(0) ATP synthase or Complex V) that produces ATP from ADP in the presence of a proton gradient across the membrane which is generated by electron transport complexes of the respiratory chain. ATP synthase complex consist of a soluble F(1) head domain - the catalytic core - and a membrane F(1) domain - the membrane proton channel. These two domains are linked by a central stalk rotating inside the F(1) region and a stationary peripheral stalk. During catalysis, ATP synthesis in the catalytic domain of F(1) is coupled via a rotary mechanism of the central stalk subunits to proton translocation. In vivo, can only synthesize ATP although its ATP hydrolase activity can be activated artificially in vitro. Part of the complex F(0) domain. The protein is ATP synthase F(0) complex subunit 8 of Guira guira (Guira cuckoo).